The chain runs to 448 residues: Glucose-6-phosphate isomerase (448 aa).

Glutamate 290 functions as the Proton donor in the catalytic mechanism. Catalysis depends on residues histidine 311 and lysine 425.

This sequence belongs to the GPI family.

The protein resides in the cytoplasm. The enzyme catalyses alpha-D-glucose 6-phosphate = beta-D-fructose 6-phosphate. The protein operates within carbohydrate biosynthesis; gluconeogenesis. Its pathway is carbohydrate degradation; glycolysis; D-glyceraldehyde 3-phosphate and glycerone phosphate from D-glucose: step 2/4. Catalyzes the reversible isomerization of glucose-6-phosphate to fructose-6-phosphate. In Latilactobacillus sakei subsp. sakei (strain 23K) (Lactobacillus sakei subsp. sakei), this protein is Glucose-6-phosphate isomerase.